The sequence spans 256 residues: Pimeloyl-[acyl-carrier protein] methyl ester esterase (256 aa).

Residues H15 to P242 enclose the AB hydrolase-1 domain. Residues W22, S82–L83, and F143–Q147 contribute to the substrate site. The active-site Nucleophile is the S82. Catalysis depends on residues D207 and H235. Residue H235 coordinates substrate.

This sequence belongs to the AB hydrolase superfamily. Carboxylesterase BioH family. In terms of assembly, monomer.

It is found in the cytoplasm. The catalysed reaction is 6-carboxyhexanoyl-[ACP] methyl ester + H2O = 6-carboxyhexanoyl-[ACP] + methanol + H(+). Its pathway is cofactor biosynthesis; biotin biosynthesis. Its function is as follows. The physiological role of BioH is to remove the methyl group introduced by BioC when the pimeloyl moiety is complete. It allows to synthesize pimeloyl-ACP via the fatty acid synthetic pathway through the hydrolysis of the ester bonds of pimeloyl-ACP esters. In Shigella dysenteriae serotype 1 (strain Sd197), this protein is Pimeloyl-[acyl-carrier protein] methyl ester esterase.